Consider the following 182-residue polypeptide: ATP-dependent protease subunit HslV (182 aa).

Residue Thr-9 is part of the active site. Residues Ala-167, Cys-170, and Thr-173 each contribute to the Na(+) site.

Belongs to the peptidase T1B family. HslV subfamily. A double ring-shaped homohexamer of HslV is capped on each side by a ring-shaped HslU homohexamer. The assembly of the HslU/HslV complex is dependent on binding of ATP.

It localises to the cytoplasm. It carries out the reaction ATP-dependent cleavage of peptide bonds with broad specificity.. With respect to regulation, allosterically activated by HslU binding. In terms of biological role, protease subunit of a proteasome-like degradation complex believed to be a general protein degrading machinery. This is ATP-dependent protease subunit HslV from Enterococcus faecalis (strain ATCC 700802 / V583).